An 888-amino-acid polypeptide reads, in one-letter code: Aconitate hydratase A (888 aa).

The [4Fe-4S] cluster site is built by C433, C499, and C502.

This sequence belongs to the aconitase/IPM isomerase family. In terms of assembly, monomer. It depends on [4Fe-4S] cluster as a cofactor.

The catalysed reaction is citrate = D-threo-isocitrate. It carries out the reaction (2S,3R)-3-hydroxybutane-1,2,3-tricarboxylate = 2-methyl-cis-aconitate + H2O. The protein operates within carbohydrate metabolism; tricarboxylic acid cycle; isocitrate from oxaloacetate: step 2/2. It functions in the pathway organic acid metabolism; propanoate degradation. Involved in the catabolism of short chain fatty acids (SCFA) via the tricarboxylic acid (TCA)(acetyl degradation route) and probably the 2-methylcitrate cycle I (propionate degradation route). Catalyzes the reversible isomerization of citrate to isocitrate via cis-aconitate. Could catalyze the hydration of 2-methyl-cis-aconitate to yield (2R,3S)-2-methylisocitrate. The apo form of AcnA functions as a RNA-binding regulatory protein. This is Aconitate hydratase A (acn) from Streptococcus mutans serotype c (strain ATCC 700610 / UA159).